The primary structure comprises 149 residues: Large ribosomal subunit protein bL9 (149 aa).

The protein belongs to the bacterial ribosomal protein bL9 family.

Its function is as follows. Binds to the 23S rRNA. This chain is Large ribosomal subunit protein bL9, found in Haemophilus influenzae (strain PittGG).